Consider the following 149-residue polypeptide: Large ribosomal subunit protein bL17 (149 aa).

The protein belongs to the bacterial ribosomal protein bL17 family. In terms of assembly, part of the 50S ribosomal subunit. Contacts protein L32.

This chain is Large ribosomal subunit protein bL17, found in Kosmotoga olearia (strain ATCC BAA-1733 / DSM 21960 / TBF 19.5.1).